The sequence spans 490 residues: Protein twist (490 aa).

Disordered regions lie at residues 48–72 (QLQH…QHAQ), 96–165 (PSNE…TGGS), and 244–264 (QQQQ…HAQM). The segment covering 54-68 (QHLHSHQHHQQHHQQ) has biased composition (basic residues). 2 stretches are compositionally biased toward low complexity: residues 102 to 134 (STSS…NPSG) and 244 to 263 (QQQQ…SHAQ). Residues Ser-325 and Ser-328 each carry the phosphoserine modification. A disordered region spans residues 330-361 (LDGSDAGGKAFRKPRRRLKRKPSKTEETDEFS). Basic residues predominate over residues 339–351 (AFRKPRRRLKRKP). The region spanning 362 to 413 (NQRVMANVRERQRTQSLNDAFKSLQQIIPTLPSDKLSKIQTLKLATRYIDFL) is the bHLH domain.

In terms of assembly, efficient DNA binding requires dimerization with another bHLH protein. Homodimer. Interacts with akirin. As to expression, expressed in embryonic abdomen; a single cell ventrally, pairs of cells laterally and three cells dorsally in each hemisegment. In the thorax, there are patches of cells associated with the imaginal disks. During larval development, cells proliferate and, in the abdomen, they form ventral, lateral and dorsal clusters, which are the precursors of the adult abdominal muscles. In the thorax, they form populations of cells in the imaginal disks that correspond to the adepithelial cells.

Its subcellular location is the nucleus. Involved in the establishment and dorsoventral patterning of germ layers in the embryo. In Drosophila melanogaster (Fruit fly), this protein is Protein twist (twi).